The primary structure comprises 375 residues: Protein HrmA (375 aa).

Unknown. May serve a regulatory function. The sequence is that of Protein HrmA (hrmA) from Pseudomonas syringae pv. syringae.